A 215-amino-acid polypeptide reads, in one-letter code: UPF0502 protein Shew_1617 (215 aa).

Belongs to the UPF0502 family.

The protein is UPF0502 protein Shew_1617 of Shewanella loihica (strain ATCC BAA-1088 / PV-4).